We begin with the raw amino-acid sequence, 431 residues long: Adenylosuccinate synthetase (431 aa).

GTP is bound by residues 12–18 and 40–42; these read GDEGKGK and GHT. Asp-13 functions as the Proton acceptor in the catalytic mechanism. The Mg(2+) site is built by Asp-13 and Gly-40. Residues 13-16, 38-41, Thr-129, Arg-143, Gln-224, Thr-239, and Arg-303 each bind IMP; these read DEGK and NAGH. The Proton donor role is filled by His-41. A substrate-binding site is contributed by 299-305; the sequence is VTTGRAR. GTP-binding positions include Arg-305, 331 to 333, and 413 to 415; these read KLD and GVG.

It belongs to the adenylosuccinate synthetase family. Homodimer. Requires Mg(2+) as cofactor.

The protein localises to the cytoplasm. It catalyses the reaction IMP + L-aspartate + GTP = N(6)-(1,2-dicarboxyethyl)-AMP + GDP + phosphate + 2 H(+). The protein operates within purine metabolism; AMP biosynthesis via de novo pathway; AMP from IMP: step 1/2. In terms of biological role, plays an important role in the de novo pathway of purine nucleotide biosynthesis. Catalyzes the first committed step in the biosynthesis of AMP from IMP. This is Adenylosuccinate synthetase from Mycobacteroides abscessus (strain ATCC 19977 / DSM 44196 / CCUG 20993 / CIP 104536 / JCM 13569 / NCTC 13031 / TMC 1543 / L948) (Mycobacterium abscessus).